A 425-amino-acid chain; its full sequence is Trigger factor (425 aa).

In terms of domain architecture, PPIase FKBP-type spans 163–248 (GDTAVIDFEG…IHEIKTKELP (86 aa)).

The protein belongs to the FKBP-type PPIase family. Tig subfamily.

The protein resides in the cytoplasm. It catalyses the reaction [protein]-peptidylproline (omega=180) = [protein]-peptidylproline (omega=0). In terms of biological role, involved in protein export. Acts as a chaperone by maintaining the newly synthesized protein in an open conformation. Functions as a peptidyl-prolyl cis-trans isomerase. The sequence is that of Trigger factor from Bacillus cereus (strain G9842).